Consider the following 485-residue polypeptide: Pre-glycoprotein polyprotein GP complex (485 aa).

Gly-2 carries N-myristoyl glycine; by host lipidation. Residues 2-17 are Extracellular-facing; the sequence is GQLISFFGEIPTILQE. A helical transmembrane segment spans residues 18–33; the sequence is ALNIALIAVSIIATIK. At 34–58 the chain is on the cytoplasmic side; that stretch reads GVVNVWKSGLIQLLMFVMLAGRSCS. Residue Cys-57 participates in Zn(2+) binding. Residues 59-424 are Extracellular-facing; sequence VQIGHHLELE…QGRTPLSLVD (366 aa). Intrachain disulfides connect Cys-85–Cys-225, Cys-271–Cys-284, Cys-293–Cys-302, and Cys-356–Cys-377. Residues Asn-88, Asn-128, Asn-179, and Asn-218 are each glycosylated (N-linked (GlcNAc...) asparagine; by host). Asn-357, Asn-365, Asn-382, and Asn-387 each carry an N-linked (GlcNAc...) asparagine; by host glycan. A helical transmembrane segment spans residues 425 to 445; sequence VCFWSTLFYTASIFLHLIRIP. Residues 446–485 are Cytoplasmic-facing; it reads THRHIVGEGCPKPHRLRADSTCACGLYKQKRRPLKWVRSN. Zn(2+) is bound by residues His-447, His-449, Cys-455, His-459, Cys-467, and Cys-469.

The protein belongs to the arenaviridae GPC protein family. As to quaternary structure, interacts with glycoprotein G2. Part of the GP complex (GP-C) together with glycoprotein G1 and glycoprotein G2. The GP-complex interacts with protein Z, which interacts with ribonucleocapsid; these interactions may induce virion budding. In terms of assembly, homotrimer; disulfide-linked. In pre-fusion state, G1 homotrimers bind G2 homotrimers via ionic interactions. Part of the GP complex (GP-C) together with glycoprotein G2 and the stable signal peptide. The GP-complex interacts with protein Z, which interacts with ribonucleocapsid; these interactions may induce virion budding. Homotrimer. Interacts with the stable signal peptide. In pre-fusion state, G2 homotrimers bind G1 homotrimers via ionic interactions. Part of the GP complex (GP-C) together with glycoprotein G1 and the stable signal peptide. Acidification in the endosome triggers rearrangements, which ultimately leads to a 6 helix bundle formed by the two heptad repeat domains (HR1 and HR2) in post-fusion state. The GP-complex interacts with protein Z, which interacts with ribonucleocapsid; these interactions may induce virion budding. Specific enzymatic cleavages in vivo yield mature proteins. GP-C polyprotein is cleaved in the endoplasmic reticulum by the host protease MBTPS1. Only cleaved glycoprotein is incorporated into virions. In terms of processing, the SSP remains stably associated with the GP complex following cleavage by signal peptidase and plays crucial roles in the trafficking of GP through the secretory pathway. Post-translationally, myristoylation is necessary for GP2-mediated fusion activity.

The protein localises to the virion membrane. It localises to the host endoplasmic reticulum membrane. Its subcellular location is the host Golgi apparatus membrane. It is found in the host cell membrane. In terms of biological role, functions as a cleaved signal peptide that is retained as the third component of the GP complex (GP-C). Helps to stabilize the spike complex in its native conformation. The SSP is required for efficient glycoprotein expression, post-translational maturation cleavage of G1 and G2, glycoprotein transport to the cell surface plasma membrane, formation of infectious virus particles, and acid pH-dependent glycoprotein-mediated cell fusion. Its function is as follows. Forms the virion spikes together with glycoprotein G2. The glycoprotein spike trimers are connected to the underlying matrix. Interacts with the host receptor leading to virus endocytosis. Functionally, forms the virion spikes together with glycoprotein G1. The glycoprotein spike trimers are connected to the underlying matrix. Class I viral fusion protein that directs fusion of viral and host endosomal membranes, leading to delivery of the nucleocapsid into the cytoplasm. Membrane fusion is mediated by irreversible conformational changes induced by acidification. This is Pre-glycoprotein polyprotein GP complex from Sigmodon hispidus (Hispid cotton rat).